A 353-amino-acid chain; its full sequence is uncharacterized protein (353 aa).

The segment covering 233 to 245 (ASCSNNEPSASLE) has biased composition (polar residues). The interval 233 to 265 (ASCSNNEPSASLESESRHFSPVNSLSPSSLSTD) is disordered. Over residues 252–263 (SPVNSLSPSSLS) the composition is skewed to low complexity.

This is an uncharacterized protein from Saccharomyces cerevisiae (strain ATCC 204508 / S288c) (Baker's yeast).